A 222-amino-acid chain; its full sequence is MIF4G domain-containing protein B (222 aa).

The 203-residue stretch at 3-205 (NSSKEDYKIQ…LEILEFRAGG (203 aa)) folds into the MIF4G domain.

This sequence belongs to the MIF4GD family. Interacts with eif4g1, eif4g2 and slbp; probably tethered by SLBP to the 3'-end of mRNAs ending with the histone stem-loop, it also interacts with eif4g1 which is bound to their 5'-end.

The protein localises to the cytoplasm. Its subcellular location is the nucleus. Functions in replication-dependent translation of histone mRNAs which differ from other eukaryotic mRNAs in that they do not end with a poly-A tail but a stem-loop. May participate in circularizing those mRNAs specifically enhancing their translation. The chain is MIF4G domain-containing protein B (mif4gdb) from Danio rerio (Zebrafish).